Here is a 79-residue protein sequence, read N- to C-terminus: uncharacterized protein (79 aa).

This is an uncharacterized protein from Sulfolobus islandicus filamentous virus (isolate Iceland/Hveragerdi) (SIFV).